The sequence spans 719 residues: DNA ligase (719 aa).

Residues 42–46 (DAAYD), 92–93 (SL), and Glu126 each bind NAD(+). Lys128 serves as the catalytic N6-AMP-lysine intermediate. NAD(+) contacts are provided by Arg149, Glu185, Lys301, and Lys325. Zn(2+) is bound by residues Cys430, Cys433, Cys448, and Cys454. Positions 640–719 (ATGSPVEGKT…DDWFKLVGED (80 aa)) constitute a BRCT domain.

The protein belongs to the NAD-dependent DNA ligase family. LigA subfamily. Mg(2+) serves as cofactor. Mn(2+) is required as a cofactor.

The enzyme catalyses NAD(+) + (deoxyribonucleotide)n-3'-hydroxyl + 5'-phospho-(deoxyribonucleotide)m = (deoxyribonucleotide)n+m + AMP + beta-nicotinamide D-nucleotide.. DNA ligase that catalyzes the formation of phosphodiester linkages between 5'-phosphoryl and 3'-hydroxyl groups in double-stranded DNA using NAD as a coenzyme and as the energy source for the reaction. It is essential for DNA replication and repair of damaged DNA. The protein is DNA ligase of Brucella ovis (strain ATCC 25840 / 63/290 / NCTC 10512).